Consider the following 327-residue polypeptide: Phenylalanine--tRNA ligase alpha subunit (327 aa).

A Mg(2+)-binding site is contributed by E252.

Belongs to the class-II aminoacyl-tRNA synthetase family. Phe-tRNA synthetase alpha subunit type 1 subfamily. As to quaternary structure, tetramer of two alpha and two beta subunits. Mg(2+) serves as cofactor.

It localises to the cytoplasm. It catalyses the reaction tRNA(Phe) + L-phenylalanine + ATP = L-phenylalanyl-tRNA(Phe) + AMP + diphosphate + H(+). In Photorhabdus laumondii subsp. laumondii (strain DSM 15139 / CIP 105565 / TT01) (Photorhabdus luminescens subsp. laumondii), this protein is Phenylalanine--tRNA ligase alpha subunit.